Here is a 259-residue protein sequence, read N- to C-terminus: HTH-type quorum sensing-dependent transcriptional regulator VjbR (259 aa).

The C12-HSL binding stretch occupies residues 76-179 (KNYFAIDPVF…AGIIHGTVCG (104 aa)). The HTH luxR-type domain occupies 183 to 248 (ANSVASLLTP…SAVATALSLG (66 aa)). Positions 207 to 226 (DGEIAEILSIARWTVVTYLQ) form a DNA-binding region, H-T-H motif.

Transcriptional regulator involved in the global control of Brucella gene expression. Mediates the effects of the quorum sensing autoinducer C12-HSL (N-dodecanoyl-homoserine lactone) on a large and diverse number of genes. The protein is HTH-type quorum sensing-dependent transcriptional regulator VjbR (vjbR) of Brucella suis biovar 1 (strain 1330).